The following is a 343-amino-acid chain: Probable dual-specificity RNA methyltransferase RlmN (343 aa).

Glu91 acts as the Proton acceptor in catalysis. In terms of domain architecture, Radical SAM core spans His97–Asp326. Cys104 and Cys331 are oxidised to a cystine. [4Fe-4S] cluster is bound by residues Cys111, Cys115, and Cys118. S-adenosyl-L-methionine is bound by residues Gly158–Glu159, Ser190, Ser213–His215, and Asn289. Residue Cys331 is the S-methylcysteine intermediate of the active site.

This sequence belongs to the radical SAM superfamily. RlmN family. [4Fe-4S] cluster is required as a cofactor.

Its subcellular location is the cytoplasm. The enzyme catalyses adenosine(2503) in 23S rRNA + 2 reduced [2Fe-2S]-[ferredoxin] + 2 S-adenosyl-L-methionine = 2-methyladenosine(2503) in 23S rRNA + 5'-deoxyadenosine + L-methionine + 2 oxidized [2Fe-2S]-[ferredoxin] + S-adenosyl-L-homocysteine. It catalyses the reaction adenosine(37) in tRNA + 2 reduced [2Fe-2S]-[ferredoxin] + 2 S-adenosyl-L-methionine = 2-methyladenosine(37) in tRNA + 5'-deoxyadenosine + L-methionine + 2 oxidized [2Fe-2S]-[ferredoxin] + S-adenosyl-L-homocysteine. Its function is as follows. Specifically methylates position 2 of adenine 2503 in 23S rRNA and position 2 of adenine 37 in tRNAs. This is Probable dual-specificity RNA methyltransferase RlmN from Thermotoga sp. (strain RQ2).